The chain runs to 198 residues: Peptidyl-tRNA hydrolase (198 aa).

A tRNA-binding site is contributed by Tyr-14. His-19 serves as the catalytic Proton acceptor. Residues Tyr-64, Asn-66, and Asn-113 each coordinate tRNA.

The protein belongs to the PTH family. Monomer.

Its subcellular location is the cytoplasm. The catalysed reaction is an N-acyl-L-alpha-aminoacyl-tRNA + H2O = an N-acyl-L-amino acid + a tRNA + H(+). Hydrolyzes ribosome-free peptidyl-tRNAs (with 1 or more amino acids incorporated), which drop off the ribosome during protein synthesis, or as a result of ribosome stalling. Functionally, catalyzes the release of premature peptidyl moieties from peptidyl-tRNA molecules trapped in stalled 50S ribosomal subunits, and thus maintains levels of free tRNAs and 50S ribosomes. This chain is Peptidyl-tRNA hydrolase, found in Acidobacterium capsulatum (strain ATCC 51196 / DSM 11244 / BCRC 80197 / JCM 7670 / NBRC 15755 / NCIMB 13165 / 161).